A 435-amino-acid polypeptide reads, in one-letter code: Galactose/lactose metabolism regulatory protein GAL80 (435 aa).

Residue Met-1 is modified to N-acetylmethionine.

This sequence to K.lactis GAL80. Monomer.

This protein is a negative regulator for the gene expression of the lactose/galactose metabolic genes. It binds to GAL4 and so blocks transcriptional activation by it, in the absence of an inducing sugar. This is Galactose/lactose metabolism regulatory protein GAL80 (GAL80) from Saccharomyces cerevisiae (strain ATCC 204508 / S288c) (Baker's yeast).